Reading from the N-terminus, the 518-residue chain is Bifunctional purine biosynthesis protein PurH (518 aa).

One can recognise an MGS-like domain in the interval 1–146 (MARIALISVS…KNHESVSILT (146 aa)).

It belongs to the PurH family.

It carries out the reaction (6R)-10-formyltetrahydrofolate + 5-amino-1-(5-phospho-beta-D-ribosyl)imidazole-4-carboxamide = 5-formamido-1-(5-phospho-D-ribosyl)imidazole-4-carboxamide + (6S)-5,6,7,8-tetrahydrofolate. The enzyme catalyses IMP + H2O = 5-formamido-1-(5-phospho-D-ribosyl)imidazole-4-carboxamide. The protein operates within purine metabolism; IMP biosynthesis via de novo pathway; 5-formamido-1-(5-phospho-D-ribosyl)imidazole-4-carboxamide from 5-amino-1-(5-phospho-D-ribosyl)imidazole-4-carboxamide (10-formyl THF route): step 1/1. It participates in purine metabolism; IMP biosynthesis via de novo pathway; IMP from 5-formamido-1-(5-phospho-D-ribosyl)imidazole-4-carboxamide: step 1/1. This Prochlorococcus marinus (strain MIT 9211) protein is Bifunctional purine biosynthesis protein PurH.